The sequence spans 199 residues: Holliday junction resolvase RecU (199 aa).

Residues Thr82, Asp84, Glu97, and Gln116 each coordinate Mg(2+).

The protein belongs to the RecU family. Requires Mg(2+) as cofactor.

It localises to the cytoplasm. The enzyme catalyses Endonucleolytic cleavage at a junction such as a reciprocal single-stranded crossover between two homologous DNA duplexes (Holliday junction).. Functionally, endonuclease that resolves Holliday junction intermediates in genetic recombination. Cleaves mobile four-strand junctions by introducing symmetrical nicks in paired strands. Promotes annealing of linear ssDNA with homologous dsDNA. Required for DNA repair, homologous recombination and chromosome segregation. This Streptococcus pyogenes serotype M1 protein is Holliday junction resolvase RecU.